The sequence spans 640 residues: MVVKRKLNCGGSNGFDFPNIPKAPRSSRRKVSGKRSDDESEICAIDLLASLAGKLLEESESSSTSTYASEADNLDHLGGLIKQELEDGYTTKPCKSEFFDPGNPASKSTSENTSVTCLPFSSFENDCILEQTPVSDCKRASGLKSLVGSITEETCVVNEDAGSEQGANTFSLKDPSQLHSQSPESVLLDGDVKLAPCTDQVPNDSFKGYRNHSKLVCRDDDENYCKYYKFSDKCKSYRPLSRVGNRRIMQSVRAISKLKCFEDTRTDGRLKALYRKRKLCYGYNPWKRETIHRKRRLSDKGLVVNYDGGLSSESVSNSPEKGESENGDFSAAKIGLLSKDSRVKFSIKSLRIPELVIEVPETATVGLLKRTVKEAVTALLGGGIRIGVLVQGKKVRDDNNTLSQTGLSCRENLGNLGFTLEPGLETLPVPLCSETPVLSLPTDSTKLSERSAASPALETGIPLPPQDEDYLINLGNSVENNDELVPHLSDIPADEQPSSDSRALVPVLALESDALALVPVNEKPKRTELSQRRTRRPFSVTEVEALVSAVEEVGTGRWRDVKLRSFENASHRTYVDLKDKWKTLVHTASISPQQRRGEPVPQELLDRVLGAHRYWTQHQMKQNGKHQVATTMVVEAGSSM.

The Ubiquitin-like domain occupies 343-422; the sequence is VKFSIKSLRI…LGNLGFTLEP (80 aa). The disordered stretch occupies residues 442–464; it reads TDSTKLSERSAASPALETGIPLP. The HTH myb-type domain maps to 530 to 589; sequence SQRRTRRPFSVTEVEALVSAVEEVGTGRWRDVKLRSFENASHRTYVDLKDKWKTLVHTAS. The segment at residues 558–585 is a DNA-binding region (H-T-H motif); sequence WRDVKLRSFENASHRTYVDLKDKWKTLV.

As to quaternary structure, homomultimer. Interacts with SNL1 (via PAH2). Interacts with STO. In terms of tissue distribution, expressed ubiquitously. Highest expression in flowers and roots.

The protein resides in the nucleus. Functionally, binds specifically to the plant telomeric double-stranded DNA sequences 5'-TTTAGGG-3'. At least 2 repeats of telomeric sequences are required for binding. Induces DNA bending. The protein is Telomere repeat-binding protein 4 (TRP4) of Arabidopsis thaliana (Mouse-ear cress).